A 417-amino-acid chain; its full sequence is Voltage-gated ClC-type chloride channel ClcB (417 aa).

Transmembrane regions (helical) follow at residues Leu-5–Ala-25, Leu-54–Met-74, Leu-146–Gly-166, Leu-168–Val-188, Val-222–Met-242, Trp-258–Trp-278, Phe-288–Ala-308, Gly-316–Leu-336, Glu-349–Ile-371, and Met-380–Leu-400.

Belongs to the chloride channel (TC 2.A.49) family. ClcB subfamily.

The protein resides in the cell inner membrane. Probably acts as an electrical shunt for an outwardly-directed proton pump that is linked to amino acid decarboxylation, as part of the extreme acid resistance (XAR) response. This is Voltage-gated ClC-type chloride channel ClcB from Salmonella dublin (strain CT_02021853).